A 298-amino-acid chain; its full sequence is Protein OS-9 homolog (298 aa).

The first 25 residues, 1–25, serve as a signal peptide directing secretion; it reads MGLAGGARVVLFVVAAAAAAALTAA. Asn-95 is a glycosylation site (N-linked (GlcNAc...) asparagine). An MRH domain is found at 121 to 246; it reads DQCFYRHEGW…TVQSPMLCKN (126 aa). Cys-123 and Cys-136 are joined by a disulfide. A mannooligosaccharide derivative contacts are provided by Trp-130, Trp-131, and Gln-143. Asn-171 and Asn-197 each carry an N-linked (GlcNAc...) asparagine glycan. 2 disulfides stabilise this stretch: Cys-201–Cys-232 and Cys-216–Cys-244. A mannooligosaccharide derivative is bound by residues Asp-202, Arg-208, Glu-228, and Tyr-234.

The protein belongs to the OS-9 family. In terms of assembly, interacts with HRD3.

It is found in the endoplasmic reticulum. Its function is as follows. Lectin which functions in endoplasmic reticulum (ER) quality control and ER-associated degradation (ERAD). May bind terminally misfolded non-glycosylated proteins as well as improperly folded glycoproteins, retain them in the ER, and possibly transfer them to the ubiquitination machinery and promote their degradation. The chain is Protein OS-9 homolog from Oryza sativa subsp. japonica (Rice).